A 66-amino-acid polypeptide reads, in one-letter code: MKEGIHPMYNEVTVKCACGNSFLTRSTRKEIFTEICSACHPFFTGKQKLVDTAGRVERFKKRYGQA.

Residues cysteine 16, cysteine 18, cysteine 36, and cysteine 39 each contribute to the Zn(2+) site.

This sequence belongs to the bacterial ribosomal protein bL31 family. Type A subfamily. As to quaternary structure, part of the 50S ribosomal subunit. Requires Zn(2+) as cofactor.

In terms of biological role, binds the 23S rRNA. The polypeptide is Large ribosomal subunit protein bL31 (Trichlorobacter lovleyi (strain ATCC BAA-1151 / DSM 17278 / SZ) (Geobacter lovleyi)).